Here is a 75-residue protein sequence, read N- to C-terminus: Protein TM_1420 (75 aa).

[2Fe-2S] cluster is bound by residues Cys6, Cys11, Cys39, and Cys43.

The cofactor is [2Fe-2S] cluster.

In terms of biological role, might be part of a multi-protein complex, possibly involved in metal cluster assembly. In Thermotoga maritima (strain ATCC 43589 / DSM 3109 / JCM 10099 / NBRC 100826 / MSB8), this protein is Protein TM_1420.